A 131-amino-acid chain; its full sequence is MNIIQQLEQEQIAQLNKTIPDFEPGDTVVVNVKVKEGDRTRVQAYEGVCIARAGGGLNENFTVRKISYGEGVERVFPIYSPLIDSIKVVRRGKVRRAKLYYLRDRRGKAARIAERAERGSEKGKTTPAAAE.

The segment covering 111 to 124 (RIAERAERGSEKGK) has biased composition (basic and acidic residues). The segment at 111 to 131 (RIAERAERGSEKGKTTPAAAE) is disordered.

This sequence belongs to the bacterial ribosomal protein bL19 family.

Functionally, this protein is located at the 30S-50S ribosomal subunit interface and may play a role in the structure and function of the aminoacyl-tRNA binding site. This is Large ribosomal subunit protein bL19 from Methylobacterium nodulans (strain LMG 21967 / CNCM I-2342 / ORS 2060).